A 339-amino-acid polypeptide reads, in one-letter code: MIEIDGSFGEGGGQILRTSLTLSALTKKPFRIYKIRANRPKPGLQRQHLTAVEAVKKLTNAKVKGDFVGSTELVFEPEDIVEKGDFEFDVGTAGSVTLILQTILPLLINRNIKVTIKGGTDVPKSPSIDYIRLTFLSLLEKIGIRVNLILIRRGHYPEGGGEIKITEVKGNPSSFSLMERGELLMIKGISHVSSLPSHIAERQAKSAKEFLLSKIKIPVEIEIDVRENERSKGSGIALTAIFEKTFLGSDSLGEKGKRAEIVGEEAAKSIYEEIISNATVDRHMSDMLMLYASLYYGEYIGSELTSHARTNSEIIKKFLNVNIQISGEKPFIFRAKKEL.

ATP contacts are provided by residues Q101 and 283–286; that span reads HMSD. The Tele-AMP-histidine intermediate role is filled by H307.

This sequence belongs to the RNA 3'-terminal cyclase family. Type 1 subfamily.

It localises to the cytoplasm. The catalysed reaction is a 3'-end 3'-phospho-ribonucleotide-RNA + ATP = a 3'-end 2',3'-cyclophospho-ribonucleotide-RNA + AMP + diphosphate. Functionally, catalyzes the conversion of 3'-phosphate to a 2',3'-cyclic phosphodiester at the end of RNA. The mechanism of action of the enzyme occurs in 3 steps: (A) adenylation of the enzyme by ATP; (B) transfer of adenylate to an RNA-N3'P to produce RNA-N3'PP5'A; (C) and attack of the adjacent 2'-hydroxyl on the 3'-phosphorus in the diester linkage to produce the cyclic end product. The biological role of this enzyme is unknown but it is likely to function in some aspects of cellular RNA processing. The chain is RNA 3'-terminal phosphate cyclase from Sulfurisphaera tokodaii (strain DSM 16993 / JCM 10545 / NBRC 100140 / 7) (Sulfolobus tokodaii).